The primary structure comprises 121 residues: Keratin-associated protein 1-4 (121 aa).

This sequence belongs to the KRTAP type 1 family. As to quaternary structure, interacts with hair keratins. Expressed in the middle/upper portions of the hair cortex, in the region termed the keratogenous zone.

Its function is as follows. In the hair cortex, hair keratin intermediate filaments are embedded in an interfilamentous matrix, consisting of hair keratin-associated proteins (KRTAP), which are essential for the formation of a rigid and resistant hair shaft through their extensive disulfide bond cross-linking with abundant cysteine residues of hair keratins. The matrix proteins include the high-sulfur and high-glycine-tyrosine keratins. The sequence is that of Keratin-associated protein 1-4 (KRTAP1-4) from Homo sapiens (Human).